A 128-amino-acid chain; its full sequence is Protein BEX1 (128 aa).

The segment at 1 to 55 (MESKDQGAKNLNMENDHQKKEEKEEKPQDTIKREPVVAPTFEAGKNCAPRGGRRR) is disordered. Positions 14–35 (ENDHQKKEEKEEKPQDTIKREP) are enriched in basic and acidic residues. Phosphoserine; by PKB/AKT1 is present on serine 105. Residues 107-128 (SLRAVSTDPPHHDHHDEFCLMP) are disordered. Residues 115–128 (PPHHDHHDEFCLMP) are compositionally biased toward basic and acidic residues. The segment at 117–121 (HHDHH) is his cluster. Cysteine 125 is a binding site for Zn(2+).

This sequence belongs to the BEX family. Interacts with neurotrophin receptor p75NTR/NGFR. Interacts with OMP. In terms of processing, phosphorylated. Phosphorylation of Ser-105 protects it from the proteasome. Ubiquitinated. Degraded by the proteasome. Expressed in the central nervous system. Expressed in Schwann cells from newborn sciatic nerve.

It is found in the nucleus. The protein localises to the cytoplasm. In terms of biological role, signaling adapter molecule involved in p75NTR/NGFR signaling. Plays a role in cell cycle progression and neuronal differentiation. Inhibits neuronal differentiation in response to nerve growth factor (NGF). May act as a link between the cell cycle and neurotrophic factor signaling, possibly by functioning as an upstream modulator of receptor signaling, coordinating biological responses to external signals with internal cellular states. In absence of reductive stress, acts as a pseudosubstrate for the CRL2(FEM1B) complex: associates with FEM1B via zinc, thereby preventing association between FEM1B and its substrates. This Rattus norvegicus (Rat) protein is Protein BEX1 (Bex1).